Here is a 349-residue protein sequence, read N- to C-terminus: Selenide, water dikinase (349 aa).

The active site involves C17. Residues K20 and 48–50 (YFD) each bind ATP. D51 lines the Mg(2+) pocket. ATP is bound by residues D68, D91, and 139 to 141 (GHS). Position 91 (D91) interacts with Mg(2+). D229 serves as a coordination point for Mg(2+).

This sequence belongs to the selenophosphate synthase 1 family. Class I subfamily. As to quaternary structure, homodimer. It depends on Mg(2+) as a cofactor.

It carries out the reaction hydrogenselenide + ATP + H2O = selenophosphate + AMP + phosphate + 2 H(+). Synthesizes selenophosphate from selenide and ATP. The polypeptide is Selenide, water dikinase (Nitrosomonas eutropha (strain DSM 101675 / C91 / Nm57)).